We begin with the raw amino-acid sequence, 440 residues long: MGQSQSGGHGPGGGKKDDKDKKKKYEPPVPTRVGKKKKKTKGPDAASKLPLVTPHTQCRLKLLKLERIKDYLLMEEEFIRNQEQMKPLEEKQEEERSKVDDLRGTPMSVGTLEEIIDDNHAIVSTSVGSEHYVSILSFVDKDLLEPGCSVLLNHKVHAVIGVLMDDTDPLVTVMKVEKAPQETYADIGGLDNQIQEIKESVELPLTHPEYYEEMGIKPPKGVILYGPPGTGKTLLAKAVANQTSATFLRVVGSELIQKYLGDGPKLVRELFRVAEEHAPSIVFIDEIDAIGTKRYDSNSGGEREIQRTMLELLNQLDGFDSRGDVKVIMATNRIETLDPALIRPGRIDRKIEFPLPDEKTKKRIFQIHTSRMTLADDVTLDDLIMAKDDLSGADIKAICTEAGLMALRERRMKVTNEDFKKSKENVLYKKQEGTPEGLYL.

Over residues 1-13 (MGQSQSGGHGPGG) the composition is skewed to gly residues. The segment at 1–49 (MGQSQSGGHGPGGGKKDDKDKKKKYEPPVPTRVGKKKKKTKGPDAASKL) is disordered. Gly-2 is lipidated: N-myristoyl glycine. Ser-4 carries the phosphoserine modification. A compositionally biased stretch (basic and acidic residues) spans 14–26 (GKKDDKDKKKKYE). Position 53 is a phosphothreonine (Thr-53). The tract at residues 84–104 (QMKPLEEKQEEERSKVDDLRG) is disordered. The segment covering 86–103 (KPLEEKQEEERSKVDDLR) has biased composition (basic and acidic residues). 226-233 (GPPGTGKT) provides a ligand contact to ATP. A Glycyl lysine isopeptide (Lys-Gly) (interchain with G-Cter in ubiquitin) cross-link involves residue Lys-237. At Lys-258 the chain carries N6-acetyllysine. A Phosphothreonine modification is found at Thr-434. Tyr-439 is subject to Phosphotyrosine.

Belongs to the AAA ATPase family. As to quaternary structure, component of the 19S proteasome regulatory particle complex. The 26S proteasome consists of a 20S core particle (CP) and two 19S regulatory subunits (RP). The regulatory particle is made of a lid composed of 9 subunits, a base containing 6 ATPases including PSMC1 and few additional components. Interacts with SCA7. Interacts with NGLY1. Interacts with PAAF1.

It localises to the cytoplasm. Its subcellular location is the nucleus. It is found in the membrane. Its function is as follows. Component of the 26S proteasome, a multiprotein complex involved in the ATP-dependent degradation of ubiquitinated proteins. This complex plays a key role in the maintenance of protein homeostasis by removing misfolded or damaged proteins, which could impair cellular functions, and by removing proteins whose functions are no longer required. Therefore, the proteasome participates in numerous cellular processes, including cell cycle progression, apoptosis, or DNA damage repair. PSMC1 belongs to the heterohexameric ring of AAA (ATPases associated with diverse cellular activities) proteins that unfolds ubiquitinated target proteins that are concurrently translocated into a proteolytic chamber and degraded into peptides. The chain is 26S proteasome regulatory subunit 4 (PSMC1) from Homo sapiens (Human).